Here is a 288-residue protein sequence, read N- to C-terminus: RanBP2-type zinc finger protein At1g67325 (288 aa).

Polar residues predominate over residues Met1 to Ala11. Disordered stretches follow at residues Met1–Asp24, Pro52–Leu77, Met176–Trp198, Pro222–Asp248, and Asn265–Gln288. Over residues Ala15–Asp24 the composition is skewed to basic and acidic residues. 3 consecutive RanBP2-type zinc fingers follow at residues Arg22 to Ala53, Arg194 to Gly225, and Pro241 to Gly272. Over residues Phe181–Asp197 the composition is skewed to basic and acidic residues. Over residues Lys223 to Pro241 the composition is skewed to polar residues. Residue Ser278 is modified to Phosphoserine.

The sequence is that of RanBP2-type zinc finger protein At1g67325 from Arabidopsis thaliana (Mouse-ear cress).